The primary structure comprises 2205 residues: Kinesin-related protein 1 (2205 aa).

Positions 2–355 (NVQVAVRVRP…LRYADSAKKI (354 aa)) constitute a Kinesin motor domain. ATP is bound at residue 102 to 109 (GQTGSGKS). Positions 362-448 (NEDAQSKLIR…EDRMAALKDM (87 aa)) form a coiled coil. One can recognise an FHA domain in the interval 483–595 (TRIGRSDSEI…LTTGNRVILG (113 aa)). A compositionally biased stretch (low complexity) spans 525–548 (FMNNNNNKENSSSTTPTSSKSPSK). Disordered regions lie at residues 525–568 (FMNN…EKKL), 971–993 (SKQQ…SSKN), 1084–1226 (DNPL…TNSA), and 1455–1508 (THQQ…STIV). Basic and acidic residues predominate over residues 549 to 568 (PKSEKEKENNNDDDDGEKKL). 3 stretches are compositionally biased toward low complexity: residues 978-991 (TSSS…SSSS), 1089-1103 (SSSA…PNNS), and 1117-1142 (TPYS…QGTP). Residues 1143 to 1164 (YNPQSNNPNVISNAPPTPNSNL) are compositionally biased toward polar residues. Composition is skewed to low complexity over residues 1169–1226 (SLAA…TNSA) and 1455–1492 (THQQ…TSSS). Positions 1523 to 1616 (EDETSGYLKK…WVQTLDPLRK (94 aa)) constitute a PH domain. 3 coiled-coil regions span residues 1879 to 1918 (KDES…ETSA), 1946 to 2034 (SAQV…NGMA), and 2075 to 2149 (AHQS…KKKY).

It belongs to the TRAFAC class myosin-kinesin ATPase superfamily. Kinesin family. Unc-104 subfamily. In terms of assembly, homodimer.

Its subcellular location is the cytoplasm. The protein resides in the cytoskeleton. It is found in the cytoplasmic vesicle membrane. Functionally, microtubule-associated force-producing protein that plays a role in organelle transport. Its motor activity is directed toward the microtubule's plus end. Transports cytoplasmic vesicles and particularly phosphatidylinositol 4,5-bisphosphate-containing liposomes along microtubules. This chain is Kinesin-related protein 1 (kif1), found in Dictyostelium discoideum (Social amoeba).